We begin with the raw amino-acid sequence, 89 residues long: Myrmicitoxin(1)-Pm2a (89 aa).

The signal sequence occupies residues 1-22; that stretch reads MEIPKLLYIAVIAIGLSGSLTC. A propeptide spanning residues 23 to 61 is cleaved from the precursor; sequence ATPLANPWGDPEAEANPEAKATAEATAEAIAEALAEPEP. Position 88 is an asparagine amide (Asn88).

The protein belongs to the formicidae venom clade 1 family. In terms of tissue distribution, expressed by the venom gland.

It is found in the secreted. Toxin that potently modulates mammalian voltage-gated sodium (Nav) channels, reducing the voltage threshold for activation and inhibiting channel inactivation. Shows activity on hNav1.6/SCN8A (EC(50)=176 nM), mNav1.7/SCN9A (EC(50)=102 nM) and hNav1.7 (EC(50)=154 nM). In vivo, causes spontaneous, gradual and long-lasting nocifensive behaviors by intraplantar injection in mice, as well as pronounced swelling of the injected paw. Does not have effect on insects (blowflies). This chain is Myrmicitoxin(1)-Pm2a, found in Pogonomyrmex maricopa (Maricopa harvester ant).